Here is a 352-residue protein sequence, read N- to C-terminus: Invasion chromosome antigen T (352 aa).

It belongs to the IcaT/YfdF family.

It is found in the secreted. Functionally, may contribute to pathogenesis, although some of its characteristics suggest it is a fossil gene. The protein is Invasion chromosome antigen T of Shigella flexneri serotype 5a (strain M90T).